The primary structure comprises 84 residues: Small ribosomal subunit protein bS20 (84 aa).

It belongs to the bacterial ribosomal protein bS20 family.

Functionally, binds directly to 16S ribosomal RNA. In Limosilactobacillus reuteri (strain DSM 20016) (Lactobacillus reuteri), this protein is Small ribosomal subunit protein bS20.